A 729-amino-acid chain; its full sequence is Monosaccharide-sensing protein 2 (729 aa).

Transmembrane regions (helical) follow at residues 1 to 21 (MSGA…QGWD), 47 to 67 (LIVA…GGVA), 81 to 101 (ILYF…VLLL), 104 to 124 (LLDG…ISET), 139 to 159 (FTGS…SLMP), and 165 to 185 (LMLG…VFFL). Over residues 347–363 (VGEGEDYPSDHGDDSED) the composition is skewed to acidic residues. Disordered stretches follow at residues 347–367 (VGEG…DLHS) and 423–442 (ERED…RRGS). Over residues 423–434 (EREDESGQKEEG) the composition is skewed to basic and acidic residues. Phosphoserine occurs at positions 438 and 448. 6 consecutive transmembrane segments (helical) span residues 507 to 527 (ALVV…NGVL), 553 to 573 (ASLL…AVAM), 585 to 605 (LLTT…SNLV), 610 to 630 (IVHA…FVMG), 650 to 670 (ICIA…TYSL), and 679 to 699 (LAGV…FVFI).

It belongs to the major facilitator superfamily. Sugar transporter (TC 2.A.1.1) family. Mostly expressed in roots and stems, and, to a lower extent, in juvenile and adult leaves, and in flower tissues.

It is found in the vacuole membrane. It carries out the reaction D-glucose(out) + H(+)(in) = D-glucose(in) + H(+)(out). The catalysed reaction is sucrose(out) + H(+)(in) = sucrose(in) + H(+)(out). In terms of biological role, sugar proton-coupled antiporter which contributes to vacuolar sugar import (e.g. monosaccharides including glucose, sucrose and fructose), particularly during stress responses (e.g. in response to cold). The sequence is that of Monosaccharide-sensing protein 2 from Arabidopsis thaliana (Mouse-ear cress).